Reading from the N-terminus, the 61-residue chain is Putative MSV199 domain-containing protein 200R (61 aa).

This chain is Putative MSV199 domain-containing protein 200R, found in Invertebrate iridescent virus 6 (IIV-6).